The following is a 744-amino-acid chain: Polyribonucleotide nucleotidyltransferase (744 aa).

Residues Asp-515 and Asp-521 each contribute to the Mg(2+) site. Positions 581–640 constitute a KH domain; that stretch reads PRVITVQVPVDKIGEVIGPKGKMINQIQDDTGADISIEDDGTVFIGATDGPSAEAARQAI. An S1 motif domain is found at 652 to 724; the sequence is GERFVGTVVK…PRGKLSLHAV (73 aa).

It belongs to the polyribonucleotide nucleotidyltransferase family. Requires Mg(2+) as cofactor.

It is found in the cytoplasm. The catalysed reaction is RNA(n+1) + phosphate = RNA(n) + a ribonucleoside 5'-diphosphate. Its function is as follows. Involved in mRNA degradation. Catalyzes the phosphorolysis of single-stranded polyribonucleotides processively in the 3'- to 5'-direction. This is Polyribonucleotide nucleotidyltransferase from Beutenbergia cavernae (strain ATCC BAA-8 / DSM 12333 / CCUG 43141 / JCM 11478 / NBRC 16432 / NCIMB 13614 / HKI 0122).